The chain runs to 363 residues: Probable mannitol dehydrogenase 3 (363 aa).

Zn(2+) is bound by residues C51, H73, C104, C107, C110, C118, and C168.

The protein belongs to the zinc-containing alcohol dehydrogenase family. Requires Zn(2+) as cofactor.

The catalysed reaction is D-mannitol + NAD(+) = D-mannose + NADH + H(+). Its function is as follows. Oxidizes mannitol to mannose. Provides the initial step by which translocated mannitol is committed to central metabolism and, by regulating mannitol pool size, is important in regulating salt tolerance at the cellular level. The sequence is that of Probable mannitol dehydrogenase 3 (CAD3) from Stylosanthes humilis (Townsville stylo).